A 291-amino-acid chain; its full sequence is N-acetylmannosamine kinase (291 aa).

Residues alanine 5–lysine 12 and glycine 132–serine 139 contribute to the ATP site. Zn(2+) is bound by residues histidine 156, cysteine 166, cysteine 168, and cysteine 173.

Belongs to the ROK (NagC/XylR) family. NanK subfamily. In terms of assembly, homodimer.

The catalysed reaction is an N-acyl-D-mannosamine + ATP = an N-acyl-D-mannosamine 6-phosphate + ADP + H(+). It participates in amino-sugar metabolism; N-acetylneuraminate degradation; D-fructose 6-phosphate from N-acetylneuraminate: step 2/5. Catalyzes the phosphorylation of N-acetylmannosamine (ManNAc) to ManNAc-6-P. The protein is N-acetylmannosamine kinase of Escherichia coli O9:H4 (strain HS).